Here is a 555-residue protein sequence, read N- to C-terminus: Pyrophosphate--fructose 6-phosphate 1-phosphotransferase (555 aa).

Gly-82 contributes to the diphosphate binding site. A substrate-binding site is contributed by Arg-146. Mg(2+) is bound at residue Asp-176. Substrate contacts are provided by residues 204–206, 243–244, 251–253, Glu-312, and 428–431; these read TID, KY, MGR, and YEGR. The active-site Proton acceptor is the Asp-206.

It belongs to the phosphofructokinase type A (PFKA) family. PPi-dependent PFK group II subfamily. Clade 'Long' sub-subfamily. As to quaternary structure, homodimer. Requires Mg(2+) as cofactor.

It is found in the cytoplasm. It carries out the reaction beta-D-fructose 6-phosphate + diphosphate = beta-D-fructose 1,6-bisphosphate + phosphate + H(+). Its pathway is carbohydrate degradation; glycolysis; D-glyceraldehyde 3-phosphate and glycerone phosphate from D-glucose: step 3/4. Its activity is regulated as follows. Non-allosteric. Its function is as follows. Catalyzes the phosphorylation of D-fructose 6-phosphate, the first committing step of glycolysis. Uses inorganic phosphate (PPi) as phosphoryl donor instead of ATP like common ATP-dependent phosphofructokinases (ATP-PFKs), which renders the reaction reversible, and can thus function both in glycolysis and gluconeogenesis. Consistently, PPi-PFK can replace the enzymes of both the forward (ATP-PFK) and reverse (fructose-bisphosphatase (FBPase)) reactions. The protein is Pyrophosphate--fructose 6-phosphate 1-phosphotransferase of Borreliella burgdorferi (strain ATCC 35210 / DSM 4680 / CIP 102532 / B31) (Borrelia burgdorferi).